Consider the following 99-residue polypeptide: RNA-binding protein Hfq (99 aa).

Residues 10–71 form the Sm domain; it reads DLFLNQLRKE…ISSILPSKPI (62 aa). Residues 77-99 form a disordered region; that stretch reads VQNSQVQNTASQQSNNNQNQESK.

The protein belongs to the Hfq family. As to quaternary structure, homohexamer.

In terms of biological role, RNA chaperone that binds small regulatory RNA (sRNAs) and mRNAs to facilitate mRNA translational regulation in response to envelope stress, environmental stress and changes in metabolite concentrations. Also binds with high specificity to tRNAs. This is RNA-binding protein Hfq from Caldicellulosiruptor saccharolyticus (strain ATCC 43494 / DSM 8903 / Tp8T 6331).